We begin with the raw amino-acid sequence, 173 residues long: Alpha-crystallin A chain (173 aa).

Met-1 carries the N-acetylmethionine modification. Positions 1-63 are required for complex formation with BFSP1 and BFSP2; it reads MDVTIQHPWF…RTVLDSGISE (63 aa). Residue Gln-6 is modified to Deamidated glutamine; partial. Phosphoserine is present on Ser-45. Residue Gln-50 is modified to Deamidated glutamine; partial. In terms of domain architecture, sHSP spans 52-162; that stretch reads LFRTVLDSGI…GHSERAIPVS (111 aa). Lys-99 is subject to N6-acetyllysine. His-100 is a binding site for Zn(2+). Asn-101 carries the deamidated asparagine; partial modification. The Zn(2+) site is built by Glu-102 and His-107. Phosphoserine is present on Ser-122. Deamidated asparagine; partial is present on Asn-123. The cysteines at positions 131 and 142 are disulfide-linked. Residues 146–173 form a disordered region; sequence VQSSMDDGHSERAIPVSREEKPSSVPSS. Deamidated glutamine; partial is present on Gln-147. The span at 151-167 shows a compositional bias: basic and acidic residues; that stretch reads DDGHSERAIPVSREEKP. His-154 provides a ligand contact to Zn(2+). The O-linked (GlcNAc) serine glycan is linked to Ser-162.

This sequence belongs to the small heat shock protein (HSP20) family. In terms of assembly, heteromer composed of three CRYAA and one CRYAB subunits. Inter-subunit bridging via zinc ions enhances stability, which is crucial as there is no protein turn over in the lens. Can also form homodimers and homotetramers (dimers of dimers) which serve as the building blocks of homooligomers. Within homooligomers, the zinc-binding motif is created from residues of 3 different molecules. His-100 and Glu-102 from one molecule are ligands of the zinc ion, and His-107 and His-154 residues from additional molecules complete the site with tetrahedral coordination geometry. Part of a complex required for lens intermediate filament formation composed of BFSP1, BFSP2 and CRYAA. Undergoes age-dependent proteolytical cleavage at the C-terminus.

The protein resides in the cytoplasm. It is found in the nucleus. Contributes to the transparency and refractive index of the lens. In its oxidized form (absence of intramolecular disulfide bond), acts as a chaperone, preventing aggregation of various proteins under a wide range of stress conditions. Required for the correct formation of lens intermediate filaments as part of a complex composed of BFSP1, BFSP2 and CRYAA. This chain is Alpha-crystallin A chain (CRYAA), found in Orycteropus afer (Aardvark).